Consider the following 440-residue polypeptide: Chromosome partition protein MukF (440 aa).

The tract at residues 208–236 is leucine-zipper; the sequence is LSETSGTLRELQDTLEAAGDKLQANLLRI.

It belongs to the MukF family. Interacts, and probably forms a ternary complex, with MukE and MukB via its C-terminal region. The complex formation is stimulated by calcium or magnesium. It is required for an interaction between MukE and MukB.

Its subcellular location is the cytoplasm. It is found in the nucleoid. In terms of biological role, involved in chromosome condensation, segregation and cell cycle progression. May participate in facilitating chromosome segregation by condensation DNA from both sides of a centrally located replisome during cell division. Not required for mini-F plasmid partitioning. Probably acts via its interaction with MukB and MukE. Overexpression results in anucleate cells. It has a calcium binding activity. This is Chromosome partition protein MukF from Escherichia coli O17:K52:H18 (strain UMN026 / ExPEC).